Consider the following 112-residue polypeptide: Notch-regulated ankyrin repeat-containing protein A (112 aa).

2 ANK repeats span residues 48–77 and 81–110; these read EGQTALHQSVIDGNLELVKLLVKFGADIRL and EGWSALHIAAFGGHQDIVLYLITKAKYSSG.

This sequence belongs to the NRARP family.

In terms of biological role, regulates independently canonical Wnt and Notch signaling by modulating LEF1 and Notch protein turnover. Stabilizes LEF1, a pivotal transcription factor in the Wnt signaling cascade, by blocking its ubiquitination. Involved in angiogenesis; involved in intersegmental vessel patterning during development. The sequence is that of Notch-regulated ankyrin repeat-containing protein A (nrarpa) from Danio rerio (Zebrafish).